Reading from the N-terminus, the 483-residue chain is Glutamyl-tRNA(Gln) amidotransferase subunit A (483 aa).

Residues Lys77 and Ser152 each act as charge relay system in the active site. Catalysis depends on Ser176, which acts as the Acyl-ester intermediate.

The protein belongs to the amidase family. GatA subfamily. In terms of assembly, heterotrimer of A, B and C subunits.

The enzyme catalyses L-glutamyl-tRNA(Gln) + L-glutamine + ATP + H2O = L-glutaminyl-tRNA(Gln) + L-glutamate + ADP + phosphate + H(+). Allows the formation of correctly charged Gln-tRNA(Gln) through the transamidation of misacylated Glu-tRNA(Gln) in organisms which lack glutaminyl-tRNA synthetase. The reaction takes place in the presence of glutamine and ATP through an activated gamma-phospho-Glu-tRNA(Gln). The protein is Glutamyl-tRNA(Gln) amidotransferase subunit A of Listeria monocytogenes serotype 4a (strain HCC23).